A 360-amino-acid polypeptide reads, in one-letter code: 3-isopropylmalate dehydrogenase (360 aa).

The span at 66 to 75 (RCHPARRRRR) shows a compositional bias: basic residues. The tract at residues 66-101 (RCHPARRRRRSEMGRHRPGHPPGARPAENPFATGPV) is disordered. 2 residues coordinate substrate: arginine 133 and aspartate 223. Mg(2+) is bound by residues aspartate 223, aspartate 247, and aspartate 251.

This sequence belongs to the isocitrate and isopropylmalate dehydrogenases family. LeuB type 1 subfamily. In terms of assembly, homodimer. It depends on Mg(2+) as a cofactor. Requires Mn(2+) as cofactor.

It is found in the cytoplasm. The enzyme catalyses (2R,3S)-3-isopropylmalate + NAD(+) = 4-methyl-2-oxopentanoate + CO2 + NADH. The protein operates within amino-acid biosynthesis; L-leucine biosynthesis; L-leucine from 3-methyl-2-oxobutanoate: step 3/4. Its function is as follows. Catalyzes the oxidation of 3-carboxy-2-hydroxy-4-methylpentanoate (3-isopropylmalate) to 3-carboxy-4-methyl-2-oxopentanoate. The product decarboxylates to 4-methyl-2 oxopentanoate. This chain is 3-isopropylmalate dehydrogenase (leuB), found in Azotobacter vinelandii.